The sequence spans 145 residues: 3-hydroxyacyl-[acyl-carrier-protein] dehydratase FabZ (145 aa).

Residue His-47 is part of the active site.

Belongs to the thioester dehydratase family. FabZ subfamily.

The protein resides in the cytoplasm. The catalysed reaction is a (3R)-hydroxyacyl-[ACP] = a (2E)-enoyl-[ACP] + H2O. Its function is as follows. Involved in unsaturated fatty acids biosynthesis. Catalyzes the dehydration of short chain beta-hydroxyacyl-ACPs and long chain saturated and unsaturated beta-hydroxyacyl-ACPs. This Acidovorax sp. (strain JS42) protein is 3-hydroxyacyl-[acyl-carrier-protein] dehydratase FabZ.